Here is a 1224-residue protein sequence, read N- to C-terminus: DNA-directed RNA polymerase subunit beta (1224 aa).

Belongs to the RNA polymerase beta chain family. In terms of assembly, the RNAP catalytic core consists of 2 alpha, 1 beta, 1 beta' and 1 omega subunit. When a sigma factor is associated with the core the holoenzyme is formed, which can initiate transcription.

The enzyme catalyses RNA(n) + a ribonucleoside 5'-triphosphate = RNA(n+1) + diphosphate. Functionally, DNA-dependent RNA polymerase catalyzes the transcription of DNA into RNA using the four ribonucleoside triphosphates as substrates. The protein is DNA-directed RNA polymerase subunit beta of Pelotomaculum thermopropionicum (strain DSM 13744 / JCM 10971 / SI).